The sequence spans 122 residues: MEFEFIRNTLMGEYYVKCSMGHEIVGRWLQEEIGKDPTMIAQVEALIDKAFSLPSQEHTLTGTEISLMIQGDEVLVQENALSHDYDVEMESEFDFYDAESTASCGIEDFVALIEQWKDFLNI.

The protein belongs to the UPF0231 family.

The protein is UPF0231 protein VP2494 of Vibrio parahaemolyticus serotype O3:K6 (strain RIMD 2210633).